The following is a 102-amino-acid chain: MPGQKIRIRLKAYDHKLLDESAKKIVEIVKQTNAKVSGPIPLPTERTLYVVLRSPLKHKDSREQFEKRIHKRLIDILEPSPKTIDALMKINLPAGVDVEINL.

This sequence belongs to the universal ribosomal protein uS10 family. In terms of assembly, part of the 30S ribosomal subunit.

In terms of biological role, involved in the binding of tRNA to the ribosomes. The chain is Small ribosomal subunit protein uS10 from Thermosipho africanus (strain TCF52B).